Reading from the N-terminus, the 352-residue chain is Biotin synthase (352 aa).

Residues 44–262 enclose the Radical SAM core domain; sequence NRVQVSTLLS…LAVARILMPQ (219 aa). Residues C59, C63, and C66 each coordinate [4Fe-4S] cluster. Positions 103, 134, 194, and 266 each coordinate [2Fe-2S] cluster.

It belongs to the radical SAM superfamily. Biotin synthase family. As to quaternary structure, homodimer. [4Fe-4S] cluster serves as cofactor. Requires [2Fe-2S] cluster as cofactor.

It catalyses the reaction (4R,5S)-dethiobiotin + (sulfur carrier)-SH + 2 reduced [2Fe-2S]-[ferredoxin] + 2 S-adenosyl-L-methionine = (sulfur carrier)-H + biotin + 2 5'-deoxyadenosine + 2 L-methionine + 2 oxidized [2Fe-2S]-[ferredoxin]. It functions in the pathway cofactor biosynthesis; biotin biosynthesis; biotin from 7,8-diaminononanoate: step 2/2. Catalyzes the conversion of dethiobiotin (DTB) to biotin by the insertion of a sulfur atom into dethiobiotin via a radical-based mechanism. The sequence is that of Biotin synthase from Pseudomonas syringae pv. tomato (strain ATCC BAA-871 / DC3000).